We begin with the raw amino-acid sequence, 158 residues long: Low molecular weight phosphotyrosine protein phosphatase (158 aa).

Ala2 is subject to N-acetylalanine. The active-site Nucleophile is Cys13. Arg19 is a catalytic residue. The Proton donor role is filled by Asp130. 2 positions are modified to phosphotyrosine: Tyr132 and Tyr133.

The protein belongs to the low molecular weight phosphotyrosine protein phosphatase family. Interacts with EPHA2; dephosphorylates EPHA2. Interacts with EPHB1. Interacts with the SH3 domain of SPTAN1. Post-translationally, phosphorylated by LCK. Phosphorylation at Tyr-132 increases its phosphatase activity.

It localises to the cytoplasm. The catalysed reaction is O-phospho-L-tyrosyl-[protein] + H2O = L-tyrosyl-[protein] + phosphate. The enzyme catalyses a phosphate monoester + H2O = an alcohol + phosphate. Inhibited by sulfhydryl reagents. In terms of biological role, acts on tyrosine phosphorylated proteins, low-MW aryl phosphates and natural and synthetic acyl phosphates with differences in substrate specificity between isoform 1 and isoform 2. This Sus scrofa (Pig) protein is Low molecular weight phosphotyrosine protein phosphatase (ACP1).